Consider the following 486-residue polypeptide: Ribosomal RNA small subunit methyltransferase F (486 aa).

S-adenosyl-L-methionine contacts are provided by residues 124 to 130 (ASAPGSK), E148, D175, and D193. The Nucleophile role is filled by C246.

This sequence belongs to the class I-like SAM-binding methyltransferase superfamily. RsmB/NOP family.

It is found in the cytoplasm. It catalyses the reaction cytidine(1407) in 16S rRNA + S-adenosyl-L-methionine = 5-methylcytidine(1407) in 16S rRNA + S-adenosyl-L-homocysteine + H(+). Its function is as follows. Specifically methylates the cytosine at position 1407 (m5C1407) of 16S rRNA. This Shewanella baltica (strain OS155 / ATCC BAA-1091) protein is Ribosomal RNA small subunit methyltransferase F.